The following is a 310-amino-acid chain: D-alanine--D-alanine ligase (310 aa).

An ATP-grasp domain is found at 104–305 (KRLFHSEGLP…MPQLAERILQ (202 aa)). 135-190 (LGDFHGAAFVKPLDSGSSVGISRAVGKDELIRGVAKALSVSHRCMVERAIEGRELT) serves as a coordination point for ATP. Mg(2+) is bound by residues aspartate 259, glutamate 272, and asparagine 274.

This sequence belongs to the D-alanine--D-alanine ligase family. Requires Mg(2+) as cofactor. The cofactor is Mn(2+).

The protein localises to the cytoplasm. It carries out the reaction 2 D-alanine + ATP = D-alanyl-D-alanine + ADP + phosphate + H(+). Its pathway is cell wall biogenesis; peptidoglycan biosynthesis. Its function is as follows. Cell wall formation. The sequence is that of D-alanine--D-alanine ligase from Magnetococcus marinus (strain ATCC BAA-1437 / JCM 17883 / MC-1).